Reading from the N-terminus, the 95-residue chain is UPF0473 protein CD630_12860 (95 aa).

Belongs to the UPF0473 family.

This Clostridioides difficile (strain 630) (Peptoclostridium difficile) protein is UPF0473 protein CD630_12860.